We begin with the raw amino-acid sequence, 631 residues long: Integrator complex subunit 10 (631 aa).

Residues 545-570 show a composition bias toward polar residues; it reads FELTSSPNSSGTPTATTVAGGSQSRR. The tract at residues 545-577 is disordered; the sequence is FELTSSPNSSGTPTATTVAGGSQSRRIGTRGAD.

The protein belongs to the Integrator subunit 10 family. In terms of assembly, belongs to the multiprotein complex Integrator, at least composed of IntS1, IntS2, IntS3, IntS4, omd/IntS5, IntS6, defl/IntS7, IntS8, IntS9, IntS10, IntS11, IntS12, asun/IntS13, IntS14 and IntS15. The core complex associates with protein phosphatase 2A subunits mts/PP2A and Pp2A-29B, to form the Integrator-PP2A (INTAC) complex.

Its subcellular location is the nucleus. In terms of biological role, component of the integrator complex, a multiprotein complex that terminates RNA polymerase II (Pol II) transcription in the promoter-proximal region of genes. The integrator complex provides a quality checkpoint during transcription elongation by driving premature transcription termination of transcripts that are unfavorably configured for transcriptional elongation: the complex terminates transcription by (1) catalyzing dephosphorylation of the C-terminal domain (CTD) of Pol II subunit Polr2A/Rbp1 and Spt5, and (2) degrading the exiting nascent RNA transcript via endonuclease activity. The integrator complex is also involved in the 3'-end processing of the U7 snRNA, and also the spliceosomal snRNAs U1, U2, U4 and U5. The protein is Integrator complex subunit 10 of Drosophila melanogaster (Fruit fly).